The chain runs to 307 residues: Ribosomal RNA small subunit methyltransferase H (307 aa).

S-adenosyl-L-methionine contacts are provided by residues 32 to 34 (GGH), Asp-52, Phe-78, Asp-99, and Gln-106.

It belongs to the methyltransferase superfamily. RsmH family.

It is found in the cytoplasm. It carries out the reaction cytidine(1402) in 16S rRNA + S-adenosyl-L-methionine = N(4)-methylcytidine(1402) in 16S rRNA + S-adenosyl-L-homocysteine + H(+). In terms of biological role, specifically methylates the N4 position of cytidine in position 1402 (C1402) of 16S rRNA. In Acinetobacter baumannii (strain SDF), this protein is Ribosomal RNA small subunit methyltransferase H.